Here is a 380-residue protein sequence, read N- to C-terminus: 3-dehydroquinate synthase (380 aa).

Belongs to the archaeal-type DHQ synthase family.

It carries out the reaction 2-amino-2,3,7-trideoxy-D-lyxo-hept-6-ulosonate + NAD(+) + H2O = 3-dehydroquinate + NH4(+) + NADH + H(+). Functionally, catalyzes the oxidative deamination and cyclization of 2-amino-3,7-dideoxy-D-threo-hept-6-ulosonic acid (ADH) to yield 3-dehydroquinate (DHQ), which is fed into the canonical shikimic pathway of aromatic amino acid biosynthesis. The chain is 3-dehydroquinate synthase from Methanosarcina barkeri (strain Fusaro / DSM 804).